A 490-amino-acid polypeptide reads, in one-letter code: Cell division cycle protein cdt2 (490 aa).

The segment at 18–40 (ITSRANNSLPPTPDSSPAAPSKK) is disordered. WD repeat units follow at residues 178 to 208 (AHNN…KVFD), 226 to 257 (YHSH…IFWD), 285 to 317 (GRDC…KLWD), 339 to 369 (KRDF…YEYS), 387 to 419 (RISS…GVVV), and 435 to 464 (GHTK…RVWN).

Belongs to the WD repeat cdt2 family. Component of the DCX(DTL) E3 ubiquitin ligase complex, at least composed of cul4, ddb1, cdt2 and pip1.

Its subcellular location is the nucleus. The protein operates within protein modification; protein ubiquitination. Functionally, substrate-specific adapter of a DCX (DDB1-CUL4-X-box) E3 ubiquitin-protein ligase complex required for DNA replication during mitosis and meiosis. The DCX(DTL) complex, also named CRL4(CDT2) complex, mediates the polyubiquitination and subsequent degradation of cdt1 and spd1. Involved in the regulation of mitotic and pre-meiotic S-phase progression. The sequence is that of Cell division cycle protein cdt2 (cdt2) from Schizosaccharomyces pombe (strain 972 / ATCC 24843) (Fission yeast).